The sequence spans 480 residues: Zinc metalloproteinase/disintegrin (480 aa).

An N-terminal signal peptide occupies residues 1–20; sequence MIQVLLITICLAVFPFQGSS. The propeptide occupies 21-190; that stretch reads IVLDSGNLNE…KASQLNVSPD (170 aa). The 195-residue stretch at 197–391 folds into the Peptidase M12B domain; sequence RFIKLAIYVD…HSPQCILNDP (195 aa). 2 N-linked (GlcNAc...) asparagine glycosylation sites follow: N259 and N279. Disulfide bonds link C308/C386, C348/C370, C350/C353, C413/C428, C415/C423, C422/C445, C436/C442, C441/C466, and C454/C473. Residue H333 participates in Zn(2+) binding. Residue E334 is part of the active site. Zn(2+) contacts are provided by H337 and H343. Residues 399–480 enclose the Disintegrin domain; sequence TPVSGNELLE…AGCPRNPFHA (82 aa). A Cell attachment site motif is present at residues 458 to 460; that stretch reads RGD.

This sequence belongs to the venom metalloproteinase (M12B) family. P-II subfamily. P-IIa sub-subfamily. In terms of assembly, monomer. Zn(2+) serves as cofactor. In terms of tissue distribution, expressed by the venom gland.

It is found in the secreted. Functionally, impairs hemostasis in the envenomed animal. Inhibits platelet aggregation and bone resorption. This is Zinc metalloproteinase/disintegrin from Gloydius halys (Chinese water mocassin).